Here is a 240-residue protein sequence, read N- to C-terminus: Leucyl/phenylalanyl-tRNA--protein transferase (240 aa).

It belongs to the L/F-transferase family.

Its subcellular location is the cytoplasm. It carries out the reaction N-terminal L-lysyl-[protein] + L-leucyl-tRNA(Leu) = N-terminal L-leucyl-L-lysyl-[protein] + tRNA(Leu) + H(+). It catalyses the reaction N-terminal L-arginyl-[protein] + L-leucyl-tRNA(Leu) = N-terminal L-leucyl-L-arginyl-[protein] + tRNA(Leu) + H(+). The enzyme catalyses L-phenylalanyl-tRNA(Phe) + an N-terminal L-alpha-aminoacyl-[protein] = an N-terminal L-phenylalanyl-L-alpha-aminoacyl-[protein] + tRNA(Phe). In terms of biological role, functions in the N-end rule pathway of protein degradation where it conjugates Leu, Phe and, less efficiently, Met from aminoacyl-tRNAs to the N-termini of proteins containing an N-terminal arginine or lysine. The protein is Leucyl/phenylalanyl-tRNA--protein transferase of Maridesulfovibrio salexigens (strain ATCC 14822 / DSM 2638 / NCIMB 8403 / VKM B-1763) (Desulfovibrio salexigens).